A 967-amino-acid chain; its full sequence is Serine/threonine-protein kinase 10 (967 aa).

A phosphoserine mark is found at Ser13 and Ser20. A Protein kinase domain is found at 36–294 (WEILGELGDG…AAQLLQHPFV (259 aa)). ATP is bound by residues 42-50 (LGDGAFGKV) and Lys65. Catalysis depends on Asp157, which acts as the Proton acceptor. Residues 175 to 224 (DFGVSAKNLKTLQKRDSFIGTPYWMAPEVVLCETMKDAPYDYKADIWSLG) form an activation segment region. At Thr185 the chain carries Phosphothreonine; by autocatalysis. A Phosphoserine; by autocatalysis modification is found at Ser191. Disordered stretches follow at residues 317 to 454 (EIED…RPNS) and 468 to 498 (GGLE…SMDY). Polar residues-rich tracts occupy residues 339–364 (NHTQ…DSST), 378–393 (PCNQ…NTSP), and 431–454 (TDQA…RPNS). 4 positions are modified to phosphoserine: Ser438, Ser450, Ser454, and Ser485. The span at 486–498 (DCSNLSTSESMDY) shows a compositional bias: polar residues. Ser514 and Ser549 each carry phosphoserine. Disordered stretches follow at residues 827–866 (INGA…ENQM) and 902–967 (LDES…GDAS). 2 stretches are compositionally biased toward basic and acidic residues: residues 835–866 (EQRE…ENQM) and 902–947 (LDES…EAET). The residue at position 951 (Thr951) is a Phosphothreonine.

The protein belongs to the protein kinase superfamily. STE Ser/Thr protein kinase family. STE20 subfamily. In terms of assembly, homodimer; homodimerization is required for activation segment autophosphorylation. Autophosphorylates following homodimerization, leading to activation of the protein.

Its subcellular location is the cell membrane. It catalyses the reaction L-seryl-[protein] + ATP = O-phospho-L-seryl-[protein] + ADP + H(+). The enzyme catalyses L-threonyl-[protein] + ATP = O-phospho-L-threonyl-[protein] + ADP + H(+). Its activity is regulated as follows. Inhibited by the pyrrole-indolinone inhibitor SU11274 (K00593): intercalates between the ATP-binding Lys-65 and alpha-C glutamate (Glu-81), resulting in a partial disordering of the lysine side chain. Also specifically inhibited by erlotinib. Slightly inhibited by gefitinib. In terms of biological role, serine/threonine-protein kinase involved in regulation of lymphocyte migration. Phosphorylates MSN, and possibly PLK1. Involved in regulation of lymphocyte migration by mediating phosphorylation of ERM proteins such as MSN. Acts as a negative regulator of MAP3K1/MEKK1. May also act as a cell cycle regulator by acting as a polo kinase kinase: mediates phosphorylation of PLK1 in vitro; however such data require additional evidences in vivo. The polypeptide is Serine/threonine-protein kinase 10 (Stk10) (Rattus norvegicus (Rat)).